A 480-amino-acid polypeptide reads, in one-letter code: Major facilitator superfamily domain-containing protein 12 (480 aa).

N-acetylmethionine is present on methionine 1. Topologically, residues 1-26 are cytoplasmic; it reads MGPGPPAAGAAPSPRPLSLVARLSYA. A helical transmembrane segment spans residues 27 to 47; sequence VGHFLNDLCASMWFTYLLLYL. At 48-56 the chain is on the lumenal side; it reads HSVRAYSSR. Residues 57–77 traverse the membrane as a helical segment; sequence GAGLLLLLGQVADGLCTPLVG. Residues 78 to 97 are Cytoplasmic-facing; sequence YEADRAASCCARYGPRKAWH. Residues 98–118 form a helical membrane-spanning segment; that stretch reads LVGTVCVLLSFPFIFSPCLGC. The Lumenal segment spans residues 119–124; that stretch reads GAATPE. The helical transmembrane segment at 125–145 threads the bilayer; that stretch reads WAALLYYGPFIVIFQFGWAST. Topologically, residues 146 to 170 are cytoplasmic; sequence QISHLSLIPELVTNDHEKVELTALR. The helical transmembrane segment at 171 to 191 threads the bilayer; the sequence is YAFTVVANITVYGAAWLLLHL. The Lumenal portion of the chain corresponds to 192–218; that stretch reads QGSSRVEPTQDISISDQLGGQDVPVFR. A helical transmembrane segment spans residues 219–239; sequence NLSLLVVGVGAVFSLLFHLGT. At 240-279 the chain is on the cytoplasmic side; that stretch reads RERRRPHAEEPGEHTPLLAPATAQPLLLWKHWLREPAFYQ. Threonine 254 is subject to Phosphothreonine; by MTOR. A helical membrane pass occupies residues 280-302; sequence VGILYMTTRLIVNLSQTYMAMYL. The Lumenal portion of the chain corresponds to 303–310; the sequence is TYSLHLPK. The chain crosses the membrane as a helical span at residues 311 to 331; sequence KFIATIPLVMYLSGFLSSFLM. Residues 332–347 are Cytoplasmic-facing; that stretch reads KPINKCIGRNMTYFSG. A run of 2 helical transmembrane segments spans residues 348–368 and 369–389; these read LLVI…GVAV and YAAA…SLAM. Over 390–402 the chain is Cytoplasmic; sequence TADLIGPHTNSGA. A helical membrane pass occupies residues 403-423; it reads FVYGSMSFLDKVANGLAVMAI. Topologically, residues 424–446 are lumenal; that stretch reads QSLHPCPSELCCRACVSFYHWAM. A helical membrane pass occupies residues 447–467; sequence VAVTGGVGVAAALCLCSLLLW. The Cytoplasmic segment spans residues 468 to 480; it reads PTRLRRWDRDARP.

This sequence belongs to the major facilitator superfamily. In terms of processing, phosphorylation at Thr-254 by MTOR via mTORC1 pathway promotes cysteine transport in lysosomes, thereby regulating lysosomal cysteine and cystine storage and redox homeostasis. In terms of tissue distribution, widely expressed, with high expression in primary melanocytes.

The protein resides in the melanosome membrane. Its subcellular location is the lysosome membrane. The enzyme catalyses L-cysteine(in) = L-cysteine(out). Functionally, transporter that mediates the import of cysteine into melanosomes, thereby regulating skin pigmentation. In melanosomes, cysteine import is required both for normal levels of cystine, the oxidized dimer of cysteine, and provide cysteine for the production of the cysteinyldopas used in pheomelanin synthesis, thereby regulating skin pigmentation. Also catalyzes import of cysteine into lysosomes in non-pigmented cells, regulating lysosomal cystine and cysteine storage, which is essnetial for redox homeostasis. The chain is Major facilitator superfamily domain-containing protein 12 from Homo sapiens (Human).